A 901-amino-acid chain; its full sequence is Protein translocase subunit SecA (901 aa).

ATP contacts are provided by residues Gln-87, 105–109 (GEGKT), and Asp-512. Positions 855 to 891 (QQLSHQDDETAAAAALAEQTGERKVGRNDPCPCGSGK) are disordered. Zn(2+)-binding residues include Cys-885, Cys-887, Cys-896, and His-897.

Belongs to the SecA family. In terms of assembly, monomer and homodimer. Part of the essential Sec protein translocation apparatus which comprises SecA, SecYEG and auxiliary proteins SecDF-YajC and YidC. The cofactor is Zn(2+).

Its subcellular location is the cell inner membrane. The protein resides in the cytoplasm. The enzyme catalyses ATP + H2O + cellular proteinSide 1 = ADP + phosphate + cellular proteinSide 2.. Part of the Sec protein translocase complex. Interacts with the SecYEG preprotein conducting channel. Has a central role in coupling the hydrolysis of ATP to the transfer of proteins into and across the cell membrane, serving both as a receptor for the preprotein-SecB complex and as an ATP-driven molecular motor driving the stepwise translocation of polypeptide chains across the membrane. The protein is Protein translocase subunit SecA of Cronobacter sakazakii (strain ATCC BAA-894) (Enterobacter sakazakii).